Reading from the N-terminus, the 358-residue chain is 2-oxoisovalerate dehydrogenase subunit beta 2, mitochondrial (358 aa).

The transit peptide at 1–16 (MAAALVRRFCRGSSFP) directs the protein to the mitochondrion. Tyrosine 119 contributes to the thiamine diphosphate binding site. 5 residues coordinate K(+): glycine 145, leucine 147, threonine 148, aspartate 198, and asparagine 200.

Heterotetramer of alpha and beta chains. Thiamine diphosphate is required as a cofactor. Expressed in the non-photosynthetic organs such as siliques, flowers and roots.

Its subcellular location is the mitochondrion matrix. It catalyses the reaction N(6)-[(R)-lipoyl]-L-lysyl-[protein] + 3-methyl-2-oxobutanoate + H(+) = N(6)-[(R)-S(8)-2-methylpropanoyldihydrolipoyl]-L-lysyl-[protein] + CO2. In terms of biological role, the branched-chain alpha-keto dehydrogenase complex catalyzes the overall conversion of alpha-keto acids to acyl-CoA and CO(2). It contains multiple copies of three enzymatic components: branched-chain alpha-keto acid decarboxylase (E1), lipoamide acyltransferase (E2) and lipoamide dehydrogenase (E3). Required during sugar starvation and acts under the control of a sugar-sensing mechanism involving Ser/Thr kinases and phosphatases. In Arabidopsis thaliana (Mouse-ear cress), this protein is 2-oxoisovalerate dehydrogenase subunit beta 2, mitochondrial (DIN4).